Consider the following 345-residue polypeptide: Heat-inducible transcription repressor HrcA (345 aa).

This sequence belongs to the HrcA family.

Functionally, negative regulator of class I heat shock genes (grpE-dnaK-dnaJ and groELS operons). Prevents heat-shock induction of these operons. The polypeptide is Heat-inducible transcription repressor HrcA (Listeria welshimeri serovar 6b (strain ATCC 35897 / DSM 20650 / CCUG 15529 / CIP 8149 / NCTC 11857 / SLCC 5334 / V8)).